The primary structure comprises 130 residues: Small ribosomal subunit protein uS9 (130 aa).

This sequence belongs to the universal ribosomal protein uS9 family.

The protein is Small ribosomal subunit protein uS9 of Bacillus anthracis (strain A0248).